The chain runs to 281 residues: Elongation factor Ts (281 aa).

Positions 79–82 (TDFV) are involved in Mg(2+) ion dislocation from EF-Tu.

It belongs to the EF-Ts family.

The protein localises to the cytoplasm. Associates with the EF-Tu.GDP complex and induces the exchange of GDP to GTP. It remains bound to the aminoacyl-tRNA.EF-Tu.GTP complex up to the GTP hydrolysis stage on the ribosome. In Wolbachia pipientis subsp. Culex pipiens (strain wPip), this protein is Elongation factor Ts.